A 1238-amino-acid polypeptide reads, in one-letter code: Topoisomerase 1-associated factor 1 (1238 aa).

Serine 626 and serine 654 each carry phosphoserine. Residues 1008–1051 (GIARSKKKDKRKRRKGEAKTNLPMFGDQDDERPQTVRERHGVFS) are disordered. The span at 1010–1023 (ARSKKKDKRKRRKG) shows a compositional bias: basic residues. Residues 1038–1050 (ERPQTVRERHGVF) show a composition bias toward basic and acidic residues. Residues serine 1056 and serine 1058 each carry the phosphoserine modification. Residues 1159–1218 (NNNNNQLSDDDVNSESRNSLGSSQPSNSQNMFQSEVYSRKESTKRSLEASAADESDEDEE) are disordered. Over residues 1173-1194 (ESRNSLGSSQPSNSQNMFQSEV) the composition is skewed to polar residues. Residues 1195-1205 (YSRKESTKRSL) are compositionally biased toward basic and acidic residues. Residues 1209–1218 (AADESDEDEE) show a composition bias toward acidic residues. Serine 1213 is modified (phosphoserine).

This sequence belongs to the timeless family. Component of the fork protection complex (FPC) consisting of TOF1 and CSM3. Interacts with WSS1 and ESC4.

Its subcellular location is the nucleus. Forms a fork protection complex (FPC) with CSM3 and which is required for chromosome segregation during meiosis and DNA damage repair. FPC coordinates leading and lagging strand synthesis and moves with the replication fork. FPC stabilizes replication forks in a configuration that is recognized by replication checkpoint sensors and protects stalled replication forks against the fork-releasing activity of RRM3 helicase. The protein is Topoisomerase 1-associated factor 1 (TOF1) of Saccharomyces cerevisiae (strain ATCC 204508 / S288c) (Baker's yeast).